A 1256-amino-acid chain; its full sequence is N-acetylglucosamine-1-phosphotransferase subunits alpha/beta (1256 aa).

Residues 22-42 (VCFLGVVVTIVSAFQFGEVVL) form a helical membrane-spanning segment. Residues Asn-83, Asn-114, Asn-148, Asn-179, and Asn-250 are each glycosylated (N-linked (GlcNAc...) asparagine). 4 cysteine pairs are disulfide-bonded: Cys-438-Cys-461, Cys-452-Cys-468, Cys-505-Cys-528, and Cys-519-Cys-535. LNR repeat units lie at residues 438–473 (CAEG…GNSG) and 505–545 (CNQG…ELYK). 6 residues coordinate Ca(2+): Asp-449, Asp-464, Asp-467, Asp-516, Asp-531, and Asp-534. N-linked (GlcNAc...) asparagine glycosylation is found at Asn-614, Asn-699, Asn-729, Asn-829, and Asn-1009. In terms of domain architecture, DMAP1-binding spans 699-798 (NISLLPKDAQ…TFPAVSVKVN (100 aa)). The EF-hand domain maps to 1005–1040 (VQPLNISQVFDEVDTDQSGVLSDREIRTLATRIHEL). Ca(2+)-binding residues include Asp-1018, Asp-1020, Ser-1022, and Glu-1029. An N-linked (GlcNAc...) asparagine glycan is attached at Asn-1129. Residues 1215-1235 (VLATLIMFTIFSFFAEQLIAL) traverse the membrane as a helical segment.

The protein belongs to the stealth family. In terms of assembly, hexamer of two alpha, two beta and two gamma (GNPTG) subunits; disulfide-linked. The alpha and/or the beta subunits of the enzyme constitute the catalytic subunits. Interacts with LYSET; facilitates proper localization of GNPTAB. Post-translationally, the alpha- and beta-subunits are generated by a proteolytic cleavage by MBTPS1 protease at the Lys-928-Asp-929 bond. Expressed in the heart, whole brain, placenta, lung, liver, skeletal muscle, kidney and pancreas.

The protein resides in the golgi apparatus membrane. The enzyme catalyses N(4)-[alpha-D-mannosyl-(1-&gt;2)-alpha-D-mannosyl-(glycan)]-L-asparaginyl-[protein] + UDP-N-acetyl-alpha-D-glucosamine = N(4)-[6-(N-acetyl-alpha-D-glucosaminyl-1-phospho)-alpha-D-mannosyl-(1-&gt;2)-alpha-D-mannosyl-(glycan)]-L-asparaginyl-[protein] + UMP + H(+). Its function is as follows. Catalyzes the formation of mannose 6-phosphate (M6P) markers on high mannose type oligosaccharides in the Golgi apparatus. M6P residues are required to bind to the M6P receptors (MPR), which mediate the vesicular transport of lysosomal enzymes to the endosomal/prelysosomal compartment. The sequence is that of N-acetylglucosamine-1-phosphotransferase subunits alpha/beta (GNPTAB) from Homo sapiens (Human).